Reading from the N-terminus, the 263-residue chain is Tryptophan 2,3-dioxygenase (263 aa).

Residues 32–36 (FIVIH), Y94, and R98 contribute to the substrate site. Residue H221 participates in heme binding. T235 provides a ligand contact to substrate.

It belongs to the tryptophan 2,3-dioxygenase family. Homotetramer. The cofactor is heme.

It carries out the reaction L-tryptophan + O2 = N-formyl-L-kynurenine. The protein operates within amino-acid degradation; L-tryptophan degradation via kynurenine pathway; L-kynurenine from L-tryptophan: step 1/2. In terms of biological role, heme-dependent dioxygenase that catalyzes the oxidative cleavage of the L-tryptophan (L-Trp) pyrrole ring and converts L-tryptophan to N-formyl-L-kynurenine. Catalyzes the oxidative cleavage of the indole moiety. This Caulobacter vibrioides (strain ATCC 19089 / CIP 103742 / CB 15) (Caulobacter crescentus) protein is Tryptophan 2,3-dioxygenase.